Reading from the N-terminus, the 126-residue chain is Glycine cleavage system H protein (126 aa).

A Lipoyl-binding domain is found at 23 to 104 (TLTVGITDHA…PYESWLFKIK (82 aa)). K64 carries the post-translational modification N6-lipoyllysine.

This sequence belongs to the GcvH family. The glycine cleavage system is composed of four proteins: P, T, L and H. (R)-lipoate serves as cofactor.

Its function is as follows. The glycine cleavage system catalyzes the degradation of glycine. The H protein shuttles the methylamine group of glycine from the P protein to the T protein. The sequence is that of Glycine cleavage system H protein from Paraburkholderia xenovorans (strain LB400).